Here is a 454-residue protein sequence, read N- to C-terminus: Protein phosphatase 1F (454 aa).

A compositionally biased stretch (polar residues) spans 1–12 (MSSGAPQKSSPM). The tract at residues 1–28 (MSSGAPQKSSPMASGAEETPGFLDTLLQ) is disordered. A PPM-type phosphatase domain is found at 156-413 (LVSIHAIRNT…DNITVMVVFL (258 aa)). Positions 198, 199, 360, and 404 each coordinate Mn(2+). The tract at residues 419 to 454 (LLEGGNQGEGDPQAEGRRQDLPSSLPEPETQAPPRS) is disordered. Position 454 is a phosphoserine (S454).

It belongs to the PP2C family. As to quaternary structure, associates with FEM1B. Mg(2+) is required as a cofactor. Requires Mn(2+) as cofactor.

The enzyme catalyses O-phospho-L-seryl-[protein] + H2O = L-seryl-[protein] + phosphate. It catalyses the reaction O-phospho-L-threonyl-[protein] + H2O = L-threonyl-[protein] + phosphate. Its function is as follows. Dephosphorylates and concomitantly deactivates CaM-kinase II activated upon autophosphorylation, and CaM-kinases IV and I activated upon phosphorylation by CaM-kinase kinase. Promotes apoptosis. This chain is Protein phosphatase 1F (PPM1F), found in Homo sapiens (Human).